The primary structure comprises 672 residues: DNA ligase (672 aa).

NAD(+) is bound by residues 37 to 41 (DAEYD), 86 to 87 (SL), and glutamate 115. Lysine 117 (N6-AMP-lysine intermediate) is an active-site residue. Arginine 138, glutamate 172, lysine 288, and lysine 312 together coordinate NAD(+). 4 residues coordinate Zn(2+): cysteine 406, cysteine 409, cysteine 424, and cysteine 429. The BRCT domain occupies 590-672 (DISSTFAGKT…LQEIQQSKQV (83 aa)).

This sequence belongs to the NAD-dependent DNA ligase family. LigA subfamily. The cofactor is Mg(2+). Requires Mn(2+) as cofactor.

It catalyses the reaction NAD(+) + (deoxyribonucleotide)n-3'-hydroxyl + 5'-phospho-(deoxyribonucleotide)m = (deoxyribonucleotide)n+m + AMP + beta-nicotinamide D-nucleotide.. DNA ligase that catalyzes the formation of phosphodiester linkages between 5'-phosphoryl and 3'-hydroxyl groups in double-stranded DNA using NAD as a coenzyme and as the energy source for the reaction. It is essential for DNA replication and repair of damaged DNA. This Anoxybacillus flavithermus (strain DSM 21510 / WK1) protein is DNA ligase.